A 245-amino-acid polypeptide reads, in one-letter code: tRNA pseudouridine synthase A 1 (245 aa).

Catalysis depends on Asp53, which acts as the Nucleophile. Position 111 (Tyr111) interacts with substrate.

It belongs to the tRNA pseudouridine synthase TruA family. In terms of assembly, homodimer.

The enzyme catalyses uridine(38/39/40) in tRNA = pseudouridine(38/39/40) in tRNA. In terms of biological role, formation of pseudouridine at positions 38, 39 and 40 in the anticodon stem and loop of transfer RNAs. This Clostridium tetani (strain Massachusetts / E88) protein is tRNA pseudouridine synthase A 1.